Consider the following 249-residue polypeptide: tRNA pseudouridine synthase A (249 aa).

The Nucleophile role is filled by D54. Y111 contributes to the substrate binding site.

The protein belongs to the tRNA pseudouridine synthase TruA family. In terms of assembly, homodimer.

It carries out the reaction uridine(38/39/40) in tRNA = pseudouridine(38/39/40) in tRNA. Functionally, formation of pseudouridine at positions 38, 39 and 40 in the anticodon stem and loop of transfer RNAs. The protein is tRNA pseudouridine synthase A of Mycoplasma capricolum subsp. capricolum (strain California kid / ATCC 27343 / NCTC 10154).